The following is a 392-amino-acid chain: 2-octaprenyl-6-methoxyphenol hydroxylase (392 aa).

The protein belongs to the UbiH/COQ6 family. In terms of assembly, component of the Ubi complex metabolon, which regroups five ubiquinone biosynthesis proteins (UbiE, UbiF, UbiG, UbiH and UbiI) and two accessory factors (UbiK and the lipid-binding protein UbiJ). Requires FAD as cofactor.

The protein localises to the cytoplasm. The protein operates within cofactor biosynthesis; ubiquinone biosynthesis. Is likely an oxygenase that introduces the hydroxyl group at carbon four of 2-octaprenyl-6-methoxyphenol resulting in the formation of 2-octaprenyl-6-methoxy-1,4-benzoquinol. This is 2-octaprenyl-6-methoxyphenol hydroxylase (ubiH) from Escherichia coli (strain K12).